Reading from the N-terminus, the 320-residue chain is Malate dehydrogenase (320 aa).

Residues 10 to 15 (GSGMIG) and D34 contribute to the NAD(+) site. Substrate is bound by residues R83 and R89. NAD(+) is bound by residues N96 and 119–121 (ITN). 2 residues coordinate substrate: N121 and R152. The active-site Proton acceptor is the H176.

This sequence belongs to the LDH/MDH superfamily. MDH type 3 family.

The catalysed reaction is (S)-malate + NAD(+) = oxaloacetate + NADH + H(+). Catalyzes the reversible oxidation of malate to oxaloacetate. The sequence is that of Malate dehydrogenase from Brucella melitensis biotype 2 (strain ATCC 23457).